We begin with the raw amino-acid sequence, 322 residues long: Methionyl-tRNA formyltransferase (322 aa).

113-116 (SLLP) serves as a coordination point for (6S)-5,6,7,8-tetrahydrofolate.

Belongs to the Fmt family.

The catalysed reaction is L-methionyl-tRNA(fMet) + (6R)-10-formyltetrahydrofolate = N-formyl-L-methionyl-tRNA(fMet) + (6S)-5,6,7,8-tetrahydrofolate + H(+). Its function is as follows. Attaches a formyl group to the free amino group of methionyl-tRNA(fMet). The formyl group appears to play a dual role in the initiator identity of N-formylmethionyl-tRNA by promoting its recognition by IF2 and preventing the misappropriation of this tRNA by the elongation apparatus. In Bacteroides thetaiotaomicron (strain ATCC 29148 / DSM 2079 / JCM 5827 / CCUG 10774 / NCTC 10582 / VPI-5482 / E50), this protein is Methionyl-tRNA formyltransferase.